Consider the following 581-residue polypeptide: MLSILMQGLRLKKCFLPILVMFFLAGCVNLLGSSFTASLKNDANASSDFYIRKIEQTQNQQDLQTYKLLAARVLVTENKIPQAEAYLAELIDLNDEQKLDKSLIEAHISAIKGKNETAEYQLSLIHLTLLSPSQKSRYYEIVSRIAENRHDNISAIKARIQMDNFLSDIQRKQQNNDRTWALLRNTDSEVLNNTDAEGNITLSGWLTLAQLYNDNLNQPAQLIQTLLTWKNYYPTHTAAHLLPTELQGLANFQQTTLTQVGLILPLSGNTRLIGETIKNGFDDAKVNYNVQVHVFDSMKMSIEQIINQAKKQGINTLVGPLLKQNVDVIVNNPYLVQDLNVLALNSTPNARAIEHLCYYGLSPEDEAESAASKMWNDTVRIPLVLVPQNNLGRRTAAAFTLRWQQLLGTDANIKFYNQTADINFALKSGLSESTDGVYIIANNKQLAEIKAVLDNINPTLKLYASSRSNSPNSGPEHRLFLNNLQFSDIPFFKDRESEQYKKIEKMTNNDYSLMHLYAMGYDAWLLINQFNEFRQIPGFTIDGLTGKLSAGPNCNVERDMTWFQYQNGSIYPLNEQDDSII.

The signal sequence occupies residues 1-26; that stretch reads MLSILMQGLRLKKCFLPILVMFFLAG. The N-palmitoyl cysteine moiety is linked to residue Cys27. A lipid anchor (S-diacylglycerol cysteine) is attached at Cys27.

The protein belongs to the LpoA family. Interacts with PBP1a.

The protein localises to the cell outer membrane. Functionally, regulator of peptidoglycan synthesis that is essential for the function of penicillin-binding protein 1A (PBP1a). The polypeptide is Penicillin-binding protein activator LpoA (Histophilus somni (strain 129Pt) (Haemophilus somnus)).